Consider the following 436-residue polypeptide: GTPase Der (436 aa).

EngA-type G domains follow at residues 4-167 (PVVA…PKGG) and 176-351 (IKFC…DNHA). GTP is bound by residues 10–17 (GRPNVGKS), 57–61 (DTGGI), 119–122 (NKID), 182–189 (GRPNVGKS), 229–233 (DTAGM), and 294–297 (NKWD). A KH-like domain is found at 352–436 (MRVQTNVLNE…PIKIIARPRK (85 aa)).

Belongs to the TRAFAC class TrmE-Era-EngA-EngB-Septin-like GTPase superfamily. EngA (Der) GTPase family. In terms of assembly, associates with the 50S ribosomal subunit.

Its function is as follows. GTPase that plays an essential role in the late steps of ribosome biogenesis. The sequence is that of GTPase Der from Geobacillus kaustophilus (strain HTA426).